A 595-amino-acid chain; its full sequence is MRSDYCGTLRSEHIGKTVSLYGWIDGWRDHGGVIFLDLRDYTGIVQIVADPQRTPESYHLASSLRNEYVVRVEGRVSARPEHSLNPRLSTGTVEVYADTLAVLNRAETPPFAISKDEEVDEKLRLKFRYLDLRRGRMQKLLRLRHRVMQIMRRHLDERGFTEIETPVLVKSTPEGARDYLVPSRVNPGDWFALPQSPQLFKQLLMVAGFDRYYQIARCFRDEDLRADRQPEFTQLDMEMSFLSMEEIIALNEGLVAAILQETMGLELSLPLPRLTYAEAMVRYGSDKPDTRFGLELVEVSEVFRESSFQVLSGAVAAGGKVVCLPVPGAEGITNTRVKPGGDLFEFVTQFGARGLLFARVREGGQVDTIGAFSKSLTPEIAAGMIEKTGAQPGHLLLFGAGDRTAVPTVLDYMGRLRLKMGEELGLIDPNRHNLLWVTDFPMFEWNAEEKRLEALHHPFTAPRPEDEHDLKTARALAYDIIWNGVEVGGGSLRIYRRALQERVFETIGLTEEEARAKFGFLLDAFEYGTPPHGGIAYGFDRFVMLIAGEQSIREVIAFPKTQRAQDLMLGAPSAVAERQLKELNVRSTLPPKTQG.

Position 174 (glutamate 174) interacts with L-aspartate. The interval 198-201 (QLFK) is aspartate. Arginine 220 contacts L-aspartate. Residues 220-222 (RDE) and glutamine 229 contribute to the ATP site. Histidine 456 serves as a coordination point for L-aspartate. Glutamate 486 contacts ATP. Arginine 493 provides a ligand contact to L-aspartate. 538–541 (GFDR) lines the ATP pocket.

The protein belongs to the class-II aminoacyl-tRNA synthetase family. Type 1 subfamily. Homodimer.

It is found in the cytoplasm. The catalysed reaction is tRNA(Asx) + L-aspartate + ATP = L-aspartyl-tRNA(Asx) + AMP + diphosphate. Functionally, aspartyl-tRNA synthetase with relaxed tRNA specificity since it is able to aspartylate not only its cognate tRNA(Asp) but also tRNA(Asn). Reaction proceeds in two steps: L-aspartate is first activated by ATP to form Asp-AMP and then transferred to the acceptor end of tRNA(Asp/Asn). This is Aspartate--tRNA(Asp/Asn) ligase from Gloeobacter violaceus (strain ATCC 29082 / PCC 7421).